The primary structure comprises 397 residues: Acetate kinase (397 aa).

Residue Asn-7 coordinates Mg(2+). Residue Lys-14 participates in ATP binding. Substrate is bound at residue Arg-91. Asp-147 serves as the catalytic Proton donor/acceptor. Residues 207-211 (HLGNG), 282-284 (DFR), and 330-334 (GLGEN) each bind ATP. A Mg(2+)-binding site is contributed by Glu-383.

Belongs to the acetokinase family. In terms of assembly, homodimer. Mg(2+) serves as cofactor. Requires Mn(2+) as cofactor.

The protein resides in the cytoplasm. It carries out the reaction acetate + ATP = acetyl phosphate + ADP. The protein operates within metabolic intermediate biosynthesis; acetyl-CoA biosynthesis; acetyl-CoA from acetate: step 1/2. Functionally, catalyzes the formation of acetyl phosphate from acetate and ATP. Can also catalyze the reverse reaction. In Moorella thermoacetica (strain ATCC 39073 / JCM 9320), this protein is Acetate kinase.